The following is a 91-amino-acid chain: Cell division topological specificity factor (91 aa).

Belongs to the MinE family.

Prevents the cell division inhibition by proteins MinC and MinD at internal division sites while permitting inhibition at polar sites. This ensures cell division at the proper site by restricting the formation of a division septum at the midpoint of the long axis of the cell. The protein is Cell division topological specificity factor of Lachnospira eligens (strain ATCC 27750 / DSM 3376 / VPI C15-48 / C15-B4) (Eubacterium eligens).